Reading from the N-terminus, the 242-residue chain is Biosynthetic peptidoglycan transglycosylase (242 aa).

Residues 19–39 (LLLACAVLWGGGVALFSIVPV) traverse the membrane as a helical segment.

It belongs to the glycosyltransferase 51 family.

The protein localises to the cell inner membrane. The enzyme catalyses [GlcNAc-(1-&gt;4)-Mur2Ac(oyl-L-Ala-gamma-D-Glu-L-Lys-D-Ala-D-Ala)](n)-di-trans,octa-cis-undecaprenyl diphosphate + beta-D-GlcNAc-(1-&gt;4)-Mur2Ac(oyl-L-Ala-gamma-D-Glu-L-Lys-D-Ala-D-Ala)-di-trans,octa-cis-undecaprenyl diphosphate = [GlcNAc-(1-&gt;4)-Mur2Ac(oyl-L-Ala-gamma-D-Glu-L-Lys-D-Ala-D-Ala)](n+1)-di-trans,octa-cis-undecaprenyl diphosphate + di-trans,octa-cis-undecaprenyl diphosphate + H(+). The protein operates within cell wall biogenesis; peptidoglycan biosynthesis. In terms of biological role, peptidoglycan polymerase that catalyzes glycan chain elongation from lipid-linked precursors. This Klebsiella oxytoca protein is Biosynthetic peptidoglycan transglycosylase.